We begin with the raw amino-acid sequence, 240 residues long: ATP synthase subunit a (240 aa).

A run of 5 helical transmembrane segments spans residues L21–F41, A83–I103, D116–V136, L184–I204, and L207–L227.

This sequence belongs to the ATPase A chain family. F-type ATPases have 2 components, CF(1) - the catalytic core - and CF(0) - the membrane proton channel. CF(1) has five subunits: alpha(3), beta(3), gamma(1), delta(1), epsilon(1). CF(0) has three main subunits: a(1), b(2) and c(9-12). The alpha and beta chains form an alternating ring which encloses part of the gamma chain. CF(1) is attached to CF(0) by a central stalk formed by the gamma and epsilon chains, while a peripheral stalk is formed by the delta and b chains.

The protein resides in the cell membrane. Functionally, key component of the proton channel; it plays a direct role in the translocation of protons across the membrane. The sequence is that of ATP synthase subunit a from Macrococcus caseolyticus (strain JCSC5402) (Macrococcoides caseolyticum).